The chain runs to 453 residues: tRNA modification GTPase MnmE (453 aa).

(6S)-5-formyl-5,6,7,8-tetrahydrofolate-binding residues include Arg-22, Glu-79, and Lys-119. Residues 215 to 376 (GMKVVIAGRP…LKQHLKSLMG (162 aa)) form the TrmE-type G domain. Asn-225 is a K(+) binding site. GTP is bound by residues 225-230 (NAGKSS), 244-250 (TEIAGTT), 269-272 (DTAG), and 334-337 (NKAD). A Mg(2+)-binding site is contributed by Ser-229. Positions 244, 246, and 249 each coordinate K(+). Thr-250 contributes to the Mg(2+) binding site. Residue Lys-453 participates in (6S)-5-formyl-5,6,7,8-tetrahydrofolate binding.

The protein belongs to the TRAFAC class TrmE-Era-EngA-EngB-Septin-like GTPase superfamily. TrmE GTPase family. Homodimer. Heterotetramer of two MnmE and two MnmG subunits. Requires K(+) as cofactor.

It localises to the cytoplasm. Functionally, exhibits a very high intrinsic GTPase hydrolysis rate. Involved in the addition of a carboxymethylaminomethyl (cmnm) group at the wobble position (U34) of certain tRNAs, forming tRNA-cmnm(5)s(2)U34. The sequence is that of tRNA modification GTPase MnmE from Shewanella sp. (strain MR-7).